Reading from the N-terminus, the 458-residue chain is Transcription factor PCF5 (458 aa).

Disordered stretches follow at residues 1 to 103, 159 to 182, 278 to 299, and 424 to 458; these read MGDA…RGPR, GAGA…ENSD, MFHH…TTQQ, and RLPA…ASHH. Positions 65 to 74 are enriched in gly residues; it reads RGGGGGGGGE. The TCP domain maps to 89–147; the sequence is RKDRHSKVCTARGPRDRRVRLSAHTAIQFYDVQDRLGYDRPSKAVDWLIKNAKDAIDKL.

Forms homodimers and heterodimers.

Its subcellular location is the nucleus. In terms of biological role, transcription activator. Binds the promoter core sequence 5'-GGNCC-3'. The sequence is that of Transcription factor PCF5 (PCF5) from Oryza sativa subsp. japonica (Rice).